Reading from the N-terminus, the 156-residue chain is MSDENNQPFFNIQRIYLKDMSLEQPNSPGIFLEQEMPSVEVEVDVKAERLAETVFEILVTGTVTAKVSDKVAFLIEAKQAGIFDIRNIPAEQIDPLVGIACPTILFPYLRSNIADAITRAGFPPIHLAEINFQALYEQRLAQMGGQDGAAQNGVTH.

Belongs to the SecB family. Homotetramer, a dimer of dimers. One homotetramer interacts with 1 SecA dimer.

It localises to the cytoplasm. Functionally, one of the proteins required for the normal export of preproteins out of the cell cytoplasm. It is a molecular chaperone that binds to a subset of precursor proteins, maintaining them in a translocation-competent state. It also specifically binds to its receptor SecA. The polypeptide is Protein-export protein SecB (Paraburkholderia xenovorans (strain LB400)).